The sequence spans 95 residues: Small ribosomal subunit protein uS14 (95 aa).

This sequence belongs to the universal ribosomal protein uS14 family. As to quaternary structure, part of the 30S ribosomal subunit. Contacts proteins S3 and S10.

Binds 16S rRNA, required for the assembly of 30S particles and may also be responsible for determining the conformation of the 16S rRNA at the A site. This Carsonella ruddii protein is Small ribosomal subunit protein uS14 (rpsN).